The primary structure comprises 75 residues: DNA-directed RNA polymerase subunit omega (75 aa).

This sequence belongs to the RNA polymerase subunit omega family. As to quaternary structure, the RNAP catalytic core consists of 2 alpha, 1 beta, 1 beta' and 1 omega subunit. When a sigma factor is associated with the core the holoenzyme is formed, which can initiate transcription.

The catalysed reaction is RNA(n) + a ribonucleoside 5'-triphosphate = RNA(n+1) + diphosphate. Functionally, promotes RNA polymerase assembly. Latches the N- and C-terminal regions of the beta' subunit thereby facilitating its interaction with the beta and alpha subunits. The protein is DNA-directed RNA polymerase subunit omega of Nitratidesulfovibrio vulgaris (strain DSM 19637 / Miyazaki F) (Desulfovibrio vulgaris).